We begin with the raw amino-acid sequence, 206 residues long: Large ribosomal subunit protein bL17 (206 aa).

Residues 130-141 show a composition bias toward basic and acidic residues; it reads ERARGTRFEARR. Positions 130–206 are disordered; it reads ERARGTRFEA…SGAGEQNSAN (77 aa). 2 stretches are compositionally biased toward low complexity: residues 160-181 and 189-200; these read TAAA…GAAG and DDSGIGDDSGAG.

This sequence belongs to the bacterial ribosomal protein bL17 family. Part of the 50S ribosomal subunit. Contacts protein L32.

The sequence is that of Large ribosomal subunit protein bL17 from Frankia casuarinae (strain DSM 45818 / CECT 9043 / HFP020203 / CcI3).